Consider the following 311-residue polypeptide: Pyrimidine-specific ribonucleoside hydrolase RihA (311 aa).

The active site involves His-240.

This sequence belongs to the IUNH family. RihA subfamily.

In terms of biological role, hydrolyzes with equal efficiency cytidine or uridine to ribose and cytosine or uracil, respectively. This Escherichia coli O8 (strain IAI1) protein is Pyrimidine-specific ribonucleoside hydrolase RihA.